The chain runs to 272 residues: Dermonecrotic toxin SpeSicTox-betaIB2a (272 aa).

Histidine 5 is a catalytic residue. Glutamate 25 and aspartate 27 together coordinate Mg(2+). Residue histidine 41 is the Nucleophile of the active site. Cystine bridges form between cysteine 45-cysteine 51 and cysteine 47-cysteine 191. Aspartate 85 contacts Mg(2+).

It belongs to the arthropod phospholipase D family. Class II subfamily. Mg(2+) is required as a cofactor. Expressed by the venom gland.

The protein localises to the secreted. It carries out the reaction an N-(acyl)-sphingosylphosphocholine = an N-(acyl)-sphingosyl-1,3-cyclic phosphate + choline. The catalysed reaction is an N-(acyl)-sphingosylphosphoethanolamine = an N-(acyl)-sphingosyl-1,3-cyclic phosphate + ethanolamine. The enzyme catalyses a 1-acyl-sn-glycero-3-phosphocholine = a 1-acyl-sn-glycero-2,3-cyclic phosphate + choline. It catalyses the reaction a 1-acyl-sn-glycero-3-phosphoethanolamine = a 1-acyl-sn-glycero-2,3-cyclic phosphate + ethanolamine. Dermonecrotic toxins cleave the phosphodiester linkage between the phosphate and headgroup of certain phospholipids (sphingolipid and lysolipid substrates), forming an alcohol (often choline) and a cyclic phosphate. This toxin acts on sphingomyelin (SM). It may also act on ceramide phosphoethanolamine (CPE), lysophosphatidylcholine (LPC) and lysophosphatidylethanolamine (LPE), but not on lysophosphatidylserine (LPS), and lysophosphatidylglycerol (LPG). It acts by transphosphatidylation, releasing exclusively cyclic phosphate products as second products. Induces dermonecrosis, hemolysis, increased vascular permeability, edema, inflammatory response, and platelet aggregation. The polypeptide is Dermonecrotic toxin SpeSicTox-betaIB2a (Sicarius peruensis (Six-eyed sand spider)).